A 536-amino-acid chain; its full sequence is Transcription factor cheR (536 aa).

The zn(2)-C6 fungal-type DNA-binding region spans 19-57 (CDRCHRHKLRCERSSVIVNGGVAVPLGPCKRCLKACIPC). Disordered regions lie at residues 70 to 122 (AKTG…LSGT) and 220 to 243 (ALTD…PREE). A compositionally biased stretch (low complexity) spans 88-108 (AASPAKRAPSPARRPTASTPR).

It localises to the nucleus. Transcription factor; part of the gene cluster that mediates the biosynthesis of chaetoglobosin A which has a unique inhibitory activity against actin polymerization in mammalian cells. Chaetoglobosin A and its intermediates are involved in the morphological differentiation of C.globosum. Binds directly to asymmetric direct repeats present in the promoters of the chaetoglobosin A cluster genes. The sequence is that of Transcription factor cheR from Chaetomium globosum (strain ATCC 6205 / CBS 148.51 / DSM 1962 / NBRC 6347 / NRRL 1970) (Soil fungus).